We begin with the raw amino-acid sequence, 30 residues long: Cysteine-rich venom protein annuliferin-a (30 aa).

This sequence belongs to the CRISP family. Contains 8 disulfide bonds. As to expression, expressed by the venom gland.

Its subcellular location is the secreted. Functionally, inhibits calcium-activated potassium channels (KCa), voltage-gated potassium channel (Kv), and the calcium release channel/ryanodine receptor (RyR). In Naja annulifera (Banded Egyptian cobra), this protein is Cysteine-rich venom protein annuliferin-a.